A 373-amino-acid polypeptide reads, in one-letter code: Acyl-CoA dehydrogenase FadE27 (373 aa).

FAD-binding residues include arginine 251, histidine 327, and glycine 331.

The protein belongs to the acyl-CoA dehydrogenase family. Heterotetramer (dimer of heterodimers) composed of FadE26 and FadE27. It depends on FAD as a cofactor.

The enzyme catalyses (25S)-3-oxocholest-4-en-26-oyl-CoA + A = 3-oxo-cholest-4,24-dien-26-oyl-CoA + AH2. The protein operates within steroid metabolism; cholesterol degradation. Its activity is regulated as follows. Uncompetitively inhibited by high concentration of 3-OCS-CoA. Its function is as follows. Involved in the first cycle of side chain dehydrogenation in the beta-oxidation of cholesterol catabolism. It contributes partly to the virulence by increasing the efficiency of beta-oxidation. Catalyzes the dehydrogenation of acyl-CoA ester side chains of (25S)-3-oxo-cholest-4-en-26-oyl-CoA (3-OCS-CoA) to yield (24E)-3-oxo-cholest-4,24-dien-26-oyl-CoA. Also able to dehydrogenate steroyl-CoA such as 3-oxo-chol-4-en-24-oyl-CoA (3-OCO-CoA) as well as 3-oxo-4-pregnene-20-carboxyl-CoA (3-OPC-CoA). It dehydrogenates only (25S)-OCS-CoA diastereomer. The polypeptide is Acyl-CoA dehydrogenase FadE27 (fadE27) (Mycobacterium tuberculosis (strain ATCC 25618 / H37Rv)).